The sequence spans 236 residues: Octanoyltransferase (236 aa).

The BPL/LPL catalytic domain occupies 36–220 (DQVPDTVLLL…HLAAVLGASS (185 aa)). Substrate contacts are provided by residues 76-83 (RGGKITWH), 150-152 (AIG), and 163-165 (GFA). Cys-181 (acyl-thioester intermediate) is an active-site residue.

It belongs to the LipB family.

The protein localises to the cytoplasm. It catalyses the reaction octanoyl-[ACP] + L-lysyl-[protein] = N(6)-octanoyl-L-lysyl-[protein] + holo-[ACP] + H(+). It participates in protein modification; protein lipoylation via endogenous pathway; protein N(6)-(lipoyl)lysine from octanoyl-[acyl-carrier-protein]: step 1/2. Functionally, catalyzes the transfer of endogenously produced octanoic acid from octanoyl-acyl-carrier-protein onto the lipoyl domains of lipoate-dependent enzymes. Lipoyl-ACP can also act as a substrate although octanoyl-ACP is likely to be the physiological substrate. This chain is Octanoyltransferase, found in Thermobifida fusca (strain YX).